A 293-amino-acid polypeptide reads, in one-letter code: Ribosomal protein L11 methyltransferase (293 aa).

4 residues coordinate S-adenosyl-L-methionine: Thr-145, Gly-166, Asp-188, and Asn-230.

The protein belongs to the methyltransferase superfamily. PrmA family.

The protein localises to the cytoplasm. The catalysed reaction is L-lysyl-[protein] + 3 S-adenosyl-L-methionine = N(6),N(6),N(6)-trimethyl-L-lysyl-[protein] + 3 S-adenosyl-L-homocysteine + 3 H(+). Methylates ribosomal protein L11. In Edwardsiella ictaluri (strain 93-146), this protein is Ribosomal protein L11 methyltransferase.